Consider the following 68-residue polypeptide: Pleurocidin-like peptide WF4 (68 aa).

The N-terminal stretch at 1-22 (MKFTATFLMMFIFVLMVEPGEC) is a signal peptide. The propeptide occupies 48-68 (GEQQDLDKRAVDEDPNVIVFE).

The protein belongs to the pleurocidin family.

It localises to the secreted. Its function is as follows. Antimicrobial peptide. The sequence is that of Pleurocidin-like peptide WF4 (ple4) from Pseudopleuronectes americanus (Winter flounder).